The following is a 112-amino-acid chain: Keratin-associated protein 12-4 (112 aa).

15 consecutive repeat copies span residues cysteine 10 to cysteine 14, cysteine 20 to threonine 24, cysteine 25 to glutamate 29, cysteine 35 to alanine 39, cysteine 41 to leucine 45, cysteine 46 to cysteine 50, cysteine 56 to cysteine 60, cysteine 61 to proline 65, cysteine 66 to cysteine 70, cysteine 71 to serine 75, cysteine 76 to leucine 80, cysteine 81 to phenylalanine 85, cysteine 86 to glycine 90, cysteine 91 to phenylalanine 95, and cysteine 96 to valine 100. Residues cysteine 10–valine 100 form a 15 X 5 AA approximate repeats region.

Belongs to the KRTAP type 12 family. Interacts with hair keratins. As to expression, restricted to a narrow region of the hair fiber cuticle, lying approximately 20 cell layers above the apex of the dermal papilla of the hair root; not detected in any other tissues.

Its function is as follows. In the hair cortex, hair keratin intermediate filaments are embedded in an interfilamentous matrix, consisting of hair keratin-associated proteins (KRTAP), which are essential for the formation of a rigid and resistant hair shaft through their extensive disulfide bond cross-linking with abundant cysteine residues of hair keratins. The matrix proteins include the high-sulfur and high-glycine-tyrosine keratins. The protein is Keratin-associated protein 12-4 (KRTAP12-4) of Homo sapiens (Human).